The sequence spans 432 residues: Short/branched chain specific acyl-CoA dehydrogenase, mitochondrial (432 aa).

A mitochondrion-targeting transit peptide spans 1 to 33; sequence MERATVRLLRGGALLRRNFPSCLSSWKTPPHAL. Lysine 70 carries the N6-acetyllysine; alternate modification. Lysine 70 is subject to N6-succinyllysine; alternate. FAD contacts are provided by residues 174–183 and 207–209; these read ICISETGAGS and WIS. Position 183 (serine 183) interacts with substrate. A Phosphoserine modification is found at serine 183. Substrate-binding residues include tyrosine 229 and tyrosine 283. An N6-acetyllysine; alternate modification is found at lysine 284. At lysine 284 the chain carries N6-succinyllysine; alternate. 291 to 294 provides a ligand contact to substrate; it reads NEGR. FAD is bound by residues arginine 319, glutamine 330, and 387-391; that span reads EWMGG. Glutamate 414 (proton acceptor) is an active-site residue. Residue 416–418 coordinates FAD; the sequence is TSN. An N6-acetyllysine modification is found at lysine 426.

The protein belongs to the acyl-CoA dehydrogenase family. In terms of assembly, homotetramer. FAD is required as a cofactor.

Its subcellular location is the mitochondrion matrix. The enzyme catalyses 2-methylbutanoyl-CoA + oxidized [electron-transfer flavoprotein] + H(+) = (2E)-2-methylbut-2-enoyl-CoA + reduced [electron-transfer flavoprotein]. It carries out the reaction (2S)-2-methylbutanoyl-CoA + oxidized [electron-transfer flavoprotein] + H(+) = (2E)-2-methylbut-2-enoyl-CoA + reduced [electron-transfer flavoprotein]. It catalyses the reaction (2R)-2-methylbutanoyl-CoA + oxidized [electron-transfer flavoprotein] + H(+) = ethylacryloyl-CoA + reduced [electron-transfer flavoprotein]. The catalysed reaction is butanoyl-CoA + oxidized [electron-transfer flavoprotein] + H(+) = (2E)-butenoyl-CoA + reduced [electron-transfer flavoprotein]. The enzyme catalyses 2-methylpropanoyl-CoA + oxidized [electron-transfer flavoprotein] + H(+) = 2-methylpropenoyl-CoA + reduced [electron-transfer flavoprotein]. It carries out the reaction hexanoyl-CoA + oxidized [electron-transfer flavoprotein] + H(+) = (2E)-hexenoyl-CoA + reduced [electron-transfer flavoprotein]. It catalyses the reaction valproyl-CoA + oxidized [electron-transfer flavoprotein] + H(+) = (2E)-2-propylpent-2-enoyl-CoA + reduced [electron-transfer flavoprotein]. The protein operates within lipid metabolism; mitochondrial fatty acid beta-oxidation. Its pathway is amino-acid degradation; L-isoleucine degradation. Functionally, short and branched chain specific acyl-CoA dehydrogenase that catalyzes the removal of one hydrogen from C-2 and C-3 of the fatty acyl-CoA thioester, resulting in the formation of trans-2-enoyl-CoA. Among the different mitochondrial acyl-CoA dehydrogenases, acts specifically on short and branched chain acyl-CoA derivatives such as (S)-2-methylbutyryl-CoA as well as short straight chain acyl-CoAs such as butyryl-CoA. Plays an important role in the metabolism of L-isoleucine by catalyzing the dehydrogenation of 2-methylbutyryl-CoA, one of the steps of the L-isoleucine catabolic pathway. Can also act on valproyl-CoA, a metabolite of the valproic acid drug. In Bos taurus (Bovine), this protein is Short/branched chain specific acyl-CoA dehydrogenase, mitochondrial (ACADSB).